A 397-amino-acid chain; its full sequence is RNA binding protein fox-1 homolog 1 (397 aa).

A disordered region spans residues 1 to 121 (MNCEREQLRG…NKSQPKRLHV (121 aa)). The segment covering 70-87 (QTHSEQSPADTSAQTVSG) has biased composition (polar residues). The segment covering 88–99 (TATQTDDAAPTD) has biased composition (low complexity). The segment covering 100–113 (GQPQTQPSENTENK) has biased composition (polar residues). One can recognise an RRM domain in the interval 117–193 (KRLHVSNIPF…RKIEVNNATA (77 aa)). Position 317 is an asymmetric dimethylarginine (Arg317). Arg388 is modified (omega-N-methylarginine).

As to quaternary structure, binds to the C-terminus of ATXN2. In terms of tissue distribution, predominantly expressed in muscle and brain.

The protein resides in the nucleus. It localises to the cytoplasm. Its function is as follows. RNA-binding protein that regulates alternative splicing events by binding to 5'-UGCAUGU-3' elements. Regulates alternative splicing of tissue-specific exons and of differentially spliced exons during erythropoiesis. The polypeptide is RNA binding protein fox-1 homolog 1 (RBFOX1) (Homo sapiens (Human)).